The sequence spans 241 residues: Demethylmenaquinone methyltransferase (241 aa).

S-adenosyl-L-methionine is bound by residues Thr-73 and Asp-92.

Belongs to the class I-like SAM-binding methyltransferase superfamily. MenG/UbiE family.

It carries out the reaction a 2-demethylmenaquinol + S-adenosyl-L-methionine = a menaquinol + S-adenosyl-L-homocysteine + H(+). It functions in the pathway quinol/quinone metabolism; menaquinone biosynthesis; menaquinol from 1,4-dihydroxy-2-naphthoate: step 2/2. Its function is as follows. Methyltransferase required for the conversion of demethylmenaquinol (DMKH2) to menaquinol (MKH2). The polypeptide is Demethylmenaquinone methyltransferase (Chlorobaculum parvum (strain DSM 263 / NCIMB 8327) (Chlorobium vibrioforme subsp. thiosulfatophilum)).